A 229-amino-acid polypeptide reads, in one-letter code: Urease accessory protein UreF (229 aa).

This sequence belongs to the UreF family. UreD, UreF and UreG form a complex that acts as a GTP-hydrolysis-dependent molecular chaperone, activating the urease apoprotein by helping to assemble the nickel containing metallocenter of UreC. The UreE protein probably delivers the nickel.

It is found in the cytoplasm. Functionally, required for maturation of urease via the functional incorporation of the urease nickel metallocenter. This chain is Urease accessory protein UreF, found in Staphylococcus epidermidis (strain ATCC 35984 / DSM 28319 / BCRC 17069 / CCUG 31568 / BM 3577 / RP62A).